A 372-amino-acid chain; its full sequence is 3-dehydroquinate synthase (372 aa).

NAD(+) contacts are provided by residues 113–117 (GVIGD), 137–138 (TS), Lys-150, Lys-159, and 177–180 (TLKT). Glu-192, His-257, and His-274 together coordinate Zn(2+).

This sequence belongs to the sugar phosphate cyclases superfamily. Dehydroquinate synthase family. Co(2+) serves as cofactor. Zn(2+) is required as a cofactor. Requires NAD(+) as cofactor.

It localises to the cytoplasm. The enzyme catalyses 7-phospho-2-dehydro-3-deoxy-D-arabino-heptonate = 3-dehydroquinate + phosphate. It participates in metabolic intermediate biosynthesis; chorismate biosynthesis; chorismate from D-erythrose 4-phosphate and phosphoenolpyruvate: step 2/7. In terms of biological role, catalyzes the conversion of 3-deoxy-D-arabino-heptulosonate 7-phosphate (DAHP) to dehydroquinate (DHQ). In Acaryochloris marina (strain MBIC 11017), this protein is 3-dehydroquinate synthase.